We begin with the raw amino-acid sequence, 461 residues long: Serine/threonine-protein kinase 4 homolog A (461 aa).

In terms of domain architecture, Protein kinase spans 20–273 (FTIVEKLGEG…AEELLKHPFI (254 aa)). ATP-binding positions include 26 to 34 (LGEGSYGSV) and Lys-49. Asp-139 (proton acceptor) is an active-site residue. At Thr-173 the chain carries Phosphothreonine; by autocatalysis. Disordered regions lie at residues 303-349 (GIEQ…EEYD) and 369-388 (NDDE…SNKK). Acidic residues predominate over residues 307-322 (RDEEEEDEDEDSEDSD). Residues 411–458 (SDKYSSYSLEELKKMLAELEIEREKEVQKTLEKFSINRQALLAVIDEK) form the SARAH domain.

Belongs to the protein kinase superfamily. STE Ser/Thr protein kinase family. STE20 subfamily. Requires Mn(2+) as cofactor. Post-translationally, undergoes autophosphorylation in the catalytic domain.

The protein resides in the cytoplasm. The protein localises to the cytosol. It catalyses the reaction L-seryl-[protein] + ATP = O-phospho-L-seryl-[protein] + ADP + H(+). The catalysed reaction is L-threonyl-[protein] + ATP = O-phospho-L-threonyl-[protein] + ADP + H(+). Functionally, regulates both cAMP signaling during early development and the stress response. Functions as an activator of adenylylcyclase. This Dictyostelium discoideum (Social amoeba) protein is Serine/threonine-protein kinase 4 homolog A (krsA).